Reading from the N-terminus, the 205-residue chain is Ephrin-A1 (205 aa).

The signal sequence occupies residues 1-17; that stretch reads MEFLWAPLLGLCCSLAA. Positions 18 to 161 constitute an Ephrin RBD domain; sequence ADRHIVFWNS…THNPQAHVNP (144 aa). N-linked (GlcNAc...) asparagine glycosylation is present at Asn26. Cystine bridges form between Cys51/Cys92 and Cys80/Cys140. Ser182 is lipidated: GPI-anchor amidated serine. The propeptide at 183–205 is removed in mature form; sequence AAPRLFPLVWAVLLLPLLLLQSQ.

It belongs to the ephrin family. As to quaternary structure, monomer. Homodimer. Forms heterodimers with EPHA2. Binds to the receptor tyrosine kinases EPHA2, EPHA3, EPHA4, EPHA5, EPHA6 and EPHA7. Also binds with low affinity to EPHA1. In terms of processing, undergoes proteolysis by a metalloprotease to give rise to a soluble monomeric form. N-Glycosylation is required for binding to EPHA2 receptor and inducing its internalization. Expressed in myogenic progenitor cells.

Its subcellular location is the cell membrane. It is found in the secreted. In terms of biological role, cell surface GPI-bound ligand for Eph receptors, a family of receptor tyrosine kinases which are crucial for migration, repulsion and adhesion during neuronal, vascular and epithelial development. Binds promiscuously Eph receptors residing on adjacent cells, leading to contact-dependent bidirectional signaling into neighboring cells. Plays an important role in angiogenesis and tumor neovascularization. The recruitment of VAV2, VAV3 and PI3-kinase p85 subunit by phosphorylated EPHA2 is critical for EFNA1-induced RAC1 GTPase activation and vascular endothelial cell migration and assembly. Exerts anti-oncogenic effects in tumor cells through activation and down-regulation of EPHA2. Activates EPHA2 by inducing tyrosine phosphorylation which leads to its internalization and degradation. Acts as a negative regulator in the tumorigenesis of gliomas by down-regulating EPHA2 and FAK. Can evoke collapse of embryonic neuronal growth cone and regulates dendritic spine morphogenesis. This chain is Ephrin-A1 (Efna1), found in Mus musculus (Mouse).